Consider the following 348-residue polypeptide: A-type ATP synthase subunit C (348 aa).

It belongs to the V-ATPase V0D/AC39 subunit family. In terms of assembly, has multiple subunits with at least A(3), B(3), C, D, E, F, H, I and proteolipid K(x).

It localises to the cell membrane. Component of the A-type ATP synthase that produces ATP from ADP in the presence of a proton gradient across the membrane. This Halorubrum lacusprofundi (strain ATCC 49239 / DSM 5036 / JCM 8891 / ACAM 34) protein is A-type ATP synthase subunit C.